Reading from the N-terminus, the 435-residue chain is Methylenetetrahydrofolate--tRNA-(uracil-5-)-methyltransferase TrmFO (435 aa).

An FAD-binding site is contributed by 9-14 (GAGLAG).

It belongs to the MnmG family. TrmFO subfamily. FAD serves as cofactor.

The protein localises to the cytoplasm. It catalyses the reaction uridine(54) in tRNA + (6R)-5,10-methylene-5,6,7,8-tetrahydrofolate + NADH + H(+) = 5-methyluridine(54) in tRNA + (6S)-5,6,7,8-tetrahydrofolate + NAD(+). The catalysed reaction is uridine(54) in tRNA + (6R)-5,10-methylene-5,6,7,8-tetrahydrofolate + NADPH + H(+) = 5-methyluridine(54) in tRNA + (6S)-5,6,7,8-tetrahydrofolate + NADP(+). Functionally, catalyzes the folate-dependent formation of 5-methyl-uridine at position 54 (M-5-U54) in all tRNAs. The chain is Methylenetetrahydrofolate--tRNA-(uracil-5-)-methyltransferase TrmFO from Staphylococcus haemolyticus (strain JCSC1435).